Consider the following 1616-residue polypeptide: S-layer-related protein (1616 aa).

Residues 1–30 (MKSLLRKWNGMMIIALVISLLTPAWGKASA) form the signal peptide. Residues 1115–1185 (VKALKLDRGT…GSGTVQATYE (71 aa)) form the BIG2 domain. Disordered stretches follow at residues 1191 to 1244 (ARVS…DGRN), 1372 to 1455 (NKRN…GRAR), 1523 to 1554 (ARGRFRNRGVPTRRGADTRTDERDAHARREAG), and 1585 to 1616 (FAGGGSRPAGRTRGRTLRARPARLPVRKARPC). Residues 1199-1225 (STGGGSDTGSGTGSGSGGGSAGGGGTA) show a composition bias toward gly residues. Basic residues predominate over residues 1372–1387 (NKRNRRLRKLRPKNRK). Residues 1406 to 1416 (PPECSASCPPA) are compositionally biased toward low complexity. The 65-residue stretch at 1438 to 1502 (WSPPRSASPT…ALDPAPAAAD (65 aa)) folds into the SLH domain. Residues 1536 to 1554 (RGADTRTDERDAHARREAG) are compositionally biased toward basic and acidic residues. The span at 1594–1616 (GRTRGRTLRARPARLPVRKARPC) shows a compositional bias: basic residues.

Its subcellular location is the secreted. The protein resides in the cell wall. It is found in the S-layer. Its function is as follows. The S-layer is a paracrystalline mono-layered assembly of proteins which coats the surface of bacteria. May play a role in the export of butirosin from the organism. In Niallia circulans (Bacillus circulans), this protein is S-layer-related protein (butB).